The chain runs to 122 residues: Large ribosomal subunit protein uL14 (122 aa).

The protein belongs to the universal ribosomal protein uL14 family. As to quaternary structure, part of the 50S ribosomal subunit. Forms a cluster with proteins L3 and L19. In the 70S ribosome, L14 and L19 interact and together make contacts with the 16S rRNA in bridges B5 and B8.

Functionally, binds to 23S rRNA. Forms part of two intersubunit bridges in the 70S ribosome. The polypeptide is Large ribosomal subunit protein uL14 (Thermosynechococcus vestitus (strain NIES-2133 / IAM M-273 / BP-1)).